A 194-amino-acid polypeptide reads, in one-letter code: ATP-dependent Clp protease proteolytic subunit (194 aa).

The active-site Nucleophile is Ser98. His123 is an active-site residue.

Belongs to the peptidase S14 family. Fourteen ClpP subunits assemble into 2 heptameric rings which stack back to back to give a disk-like structure with a central cavity, resembling the structure of eukaryotic proteasomes.

It is found in the cytoplasm. It catalyses the reaction Hydrolysis of proteins to small peptides in the presence of ATP and magnesium. alpha-casein is the usual test substrate. In the absence of ATP, only oligopeptides shorter than five residues are hydrolyzed (such as succinyl-Leu-Tyr-|-NHMec, and Leu-Tyr-Leu-|-Tyr-Trp, in which cleavage of the -Tyr-|-Leu- and -Tyr-|-Trp bonds also occurs).. Functionally, cleaves peptides in various proteins in a process that requires ATP hydrolysis. Has a chymotrypsin-like activity. Plays a major role in the degradation of misfolded proteins. In Ruminiclostridium cellulolyticum (strain ATCC 35319 / DSM 5812 / JCM 6584 / H10) (Clostridium cellulolyticum), this protein is ATP-dependent Clp protease proteolytic subunit.